The following is a 328-amino-acid chain: Cytochrome c biogenesis protein CcsA (328 aa).

Helical transmembrane passes span I13–L33, G46–G66, L73–F93, L101–L121, M146–I166, I234–N254, W263–I283, and A295–L315.

Belongs to the CcmF/CycK/Ccl1/NrfE/CcsA family. May interact with Ccs1.

It localises to the plastid. Its subcellular location is the chloroplast thylakoid membrane. Required during biogenesis of c-type cytochromes (cytochrome c6 and cytochrome f) at the step of heme attachment. This chain is Cytochrome c biogenesis protein CcsA, found in Crucihimalaya wallichii (Rock-cress).